The sequence spans 281 residues: Putative phosphatase/phosphodiesterase MPN_349 (281 aa).

Residues D12, E43, N44, and N71 each coordinate Fe cation. The active-site Proton donor is the H72. H158, H183, and H185 together coordinate Fe cation.

Belongs to the YmdB-like family. Requires Fe(3+) as cofactor.

This is Putative phosphatase/phosphodiesterase MPN_349 from Mycoplasma pneumoniae (strain ATCC 29342 / M129 / Subtype 1) (Mycoplasmoides pneumoniae).